A 213-amino-acid polypeptide reads, in one-letter code: Cytochrome c biogenesis ATP-binding export protein CcmA (213 aa).

Residues 7-213 enclose the ABC transporter domain; sequence LKTKKLACQR…VRLENYKFTE (207 aa). 39 to 46 is an ATP binding site; it reads GHNGIGKT.

Belongs to the ABC transporter superfamily. CcmA exporter (TC 3.A.1.107) family. The complex is composed of two ATP-binding proteins (CcmA) and two transmembrane proteins (CcmB).

It localises to the cell inner membrane. The enzyme catalyses heme b(in) + ATP + H2O = heme b(out) + ADP + phosphate + H(+). In terms of biological role, part of the ABC transporter complex CcmAB involved in the biogenesis of c-type cytochromes; once thought to export heme, this seems not to be the case, but its exact role is uncertain. Responsible for energy coupling to the transport system. The chain is Cytochrome c biogenesis ATP-binding export protein CcmA from Pasteurella multocida (strain Pm70).